We begin with the raw amino-acid sequence, 780 residues long: Potassium/sodium hyperpolarization-activated cyclic nucleotide-gated channel 3 (780 aa).

The tract at residues 1–47 (MEEEARPAVGDGEAATPARETPPAAPAQARAASGGVPESAPEPKRRQ) is disordered. At 1–96 (MEEEARPAVG…PYSDFRFYWD (96 aa)) the chain is on the cytoplasmic side. Positions 13 to 32 (EAATPARETPPAAPAQARAA) are enriched in low complexity. An involved in subunit assembly region spans residues 45–90 (RRQLGTLLQPTVNKFSLRVFGSHKAVEIEQERVKSAGAWIIHPYSD). The helical transmembrane segment at 97 to 117 (LIMLLLMVGNLIVLPVGITFF) threads the bilayer. The Extracellular portion of the chain corresponds to 118–123 (KEENSP). The helical transmembrane segment at 124–144 (PWIVFNVLSDTFFLLDLVLNF) threads the bilayer. Topologically, residues 145-170 (RTGIVVEEGAEILLAPRAIRTRYLRT) are cytoplasmic. A helical membrane pass occupies residues 171–191 (WFLVDLISSIPVDYIFLVVEL). Over 192-200 (EPRLDAEVY) the chain is Extracellular. Residues 201-221 (KTARALRIVRFTKILSLLRLL) traverse the membrane as a helical; Voltage-sensor segment. Residues 222–252 (RLSRLIRYMHQWEEIFHMTYDLASAVVRIFN) lie on the Cytoplasmic side of the membrane. Residues 253 to 273 (LIGMMLLLCHWDGCLQFLVPM) traverse the membrane as a helical segment. At 274–296 (LQDFPSDCWVSMNRMVNHSWGRQ) the chain is on the extracellular side. Asparagine 290 carries N-linked (GlcNAc...) asparagine glycosylation. Residues 297-318 (YSHALFKAMSHMLCIGYGQQAP) constitute an intramembrane region (pore-forming). Residues 319 to 328 (VGMPDVWLTM) lie on the Extracellular side of the membrane. Residues 329–349 (LSMIVGATCYAMFIGHATALI) traverse the membrane as a helical segment. Topologically, residues 350–780 (QSLDSSRRQY…PRGPQISANM (431 aa)) are cytoplasmic. Positions 353–780 (DSSRRQYQEK…PRGPQISANM (428 aa)) are interaction with KCTD3. The 3',5'-cyclic AMP site is built by glycine 491, glutamate 492, cysteine 494, arginine 501, threonine 502, arginine 542, and arginine 545. The interval 549-569 (KNSILQRKRSEPSPGSSSGGV) is disordered. Residue serine 634 is modified to Phosphoserine. Residues 687-698 (ASLSRTGRSQVS) show a composition bias toward polar residues. Residues 687-780 (ASLSRTGRSQ…PRGPQISANM (94 aa)) form a disordered region.

The protein belongs to the potassium channel HCN family. In terms of assembly, homotetramer. The potassium channel is composed of a homo- or heterotetrameric complex of pore-forming subunits. Interacts with HCN1. Interacts with KCTD3; this interaction increases cell surface expression and current density of this channel. Interacts with PEX5L.

Its subcellular location is the cell membrane. It catalyses the reaction K(+)(in) = K(+)(out). It carries out the reaction Na(+)(in) = Na(+)(out). With respect to regulation, inhibited by Cs(1+) and ivabradine. Unlike HCN2 and HCN4, HCN3 is insensitive to cyclic nucleotides, such as cAMP or cGMP. This lack of sensitivity of HCN3, despite harboring a functional cyclic nucleotide-binding domain (CNBD), may be explained by its shorter C-terminal sequence, which may alter the normal autoinhibition of the channel. Phosphatidylinositol-4,5-bisphosphate (PIP(2)) shifts HCN3 activation to more depolarized potentials and accelerated activation kinetics. Functionally, hyperpolarization-activated ion channel that are permeable to sodium and potassium ions, with an about 3:1 preference for potassium ions. Contributes to the native pacemaker currents in heart (If) and in neurons (Ih). In particular, plays a pivotal role in maintaining excitability and promoting rhythmic burst firing within hypothalamic nuclei. Exerts a significant influence on the configuration of the cardiac action potential waveform. Does not appear to play a prominent role in the processing of acute, neuropathic, or inflammatory pain. This Rattus norvegicus (Rat) protein is Potassium/sodium hyperpolarization-activated cyclic nucleotide-gated channel 3 (Hcn3).